The sequence spans 197 residues: Thymidine kinase (197 aa).

Residues 9–16 (SAMDAGKT) and 87–90 (DEIH) each bind ATP. Glu-88 acts as the Proton acceptor in catalysis. Zn(2+)-binding residues include Cys-145, Cys-147, Cys-187, and His-190.

The protein belongs to the thymidine kinase family. As to quaternary structure, homotetramer.

The protein localises to the cytoplasm. The enzyme catalyses thymidine + ATP = dTMP + ADP + H(+). This Francisella tularensis subsp. tularensis (strain SCHU S4 / Schu 4) protein is Thymidine kinase.